The primary structure comprises 469 residues: Arginine biosynthesis bifunctional protein ArgJ, mitochondrial (469 aa).

Thr199, Lys228, Thr239, Glu325, Asn464, and Thr469 together coordinate substrate. Thr239 functions as the Nucleophile in the catalytic mechanism.

The protein belongs to the ArgJ family. As to quaternary structure, heterodimer of an alpha and a beta chain. Post-translationally, the alpha and beta chains are autoproteolytically processed from a single precursor protein within the mitochondrion.

It localises to the mitochondrion matrix. It carries out the reaction N(2)-acetyl-L-ornithine + L-glutamate = N-acetyl-L-glutamate + L-ornithine. The enzyme catalyses L-glutamate + acetyl-CoA = N-acetyl-L-glutamate + CoA + H(+). Its pathway is amino-acid biosynthesis; L-arginine biosynthesis; L-ornithine and N-acetyl-L-glutamate from L-glutamate and N(2)-acetyl-L-ornithine (cyclic): step 1/1. It functions in the pathway amino-acid biosynthesis; L-arginine biosynthesis; N(2)-acetyl-L-ornithine from L-glutamate: step 1/4. Functionally, catalyzes two activities which are involved in the cyclic version of arginine biosynthesis: the synthesis of acetylglutamate from glutamate and acetyl-CoA, and of ornithine by transacetylation between acetylornithine and glutamate. This is Arginine biosynthesis bifunctional protein ArgJ, mitochondrial from Neurospora crassa (strain ATCC 24698 / 74-OR23-1A / CBS 708.71 / DSM 1257 / FGSC 987).